We begin with the raw amino-acid sequence, 78 residues long: HssA/B-like protein 30 (78 aa).

The tract at residues 1 to 32 is disordered; the sequence is MTLFSSITSISKTNTSSKSSVNSLSGSSLSMG.

It belongs to the hssA/B family.

The chain is HssA/B-like protein 30 (hssl30) from Dictyostelium discoideum (Social amoeba).